The chain runs to 192 residues: Orotate phosphoribosyltransferase (192 aa).

116–124 lines the 5-phospho-alpha-D-ribose 1-diphosphate pocket; it reads EDVVTTGKS. The orotate site is built by threonine 120 and arginine 148.

The protein belongs to the purine/pyrimidine phosphoribosyltransferase family. PyrE subfamily. As to quaternary structure, homodimer. Requires Mg(2+) as cofactor.

The enzyme catalyses orotidine 5'-phosphate + diphosphate = orotate + 5-phospho-alpha-D-ribose 1-diphosphate. It participates in pyrimidine metabolism; UMP biosynthesis via de novo pathway; UMP from orotate: step 1/2. In terms of biological role, catalyzes the transfer of a ribosyl phosphate group from 5-phosphoribose 1-diphosphate to orotate, leading to the formation of orotidine monophosphate (OMP). The sequence is that of Orotate phosphoribosyltransferase from Clostridium perfringens (strain ATCC 13124 / DSM 756 / JCM 1290 / NCIMB 6125 / NCTC 8237 / Type A).